Consider the following 57-residue polypeptide: UPF0391 membrane protein RPB_2510 (57 aa).

Helical transmembrane passes span 6–26 (WALI…TGIS) and 35–55 (ILFY…FTIF).

Belongs to the UPF0391 family.

The protein localises to the cell membrane. In Rhodopseudomonas palustris (strain HaA2), this protein is UPF0391 membrane protein RPB_2510.